The sequence spans 192 residues: Leucine-rich repeat-containing protein 51 (192 aa).

3 LRR repeats span residues 49 to 71, 80 to 101, and 103 to 124; these read SLTQ…NQVA, NLAW…LTTF, and NLSV…NKLA. The LRRCT domain occupies 137-175; it reads NPMEEEKGYRQYVLCTLPHITTFDFSGVTKADRTTAEVW.

It localises to the cytoplasm. The sequence is that of Leucine-rich repeat-containing protein 51 from Macaca mulatta (Rhesus macaque).